A 274-amino-acid chain; its full sequence is Cytochrome b-c1 complex subunit Rieske, mitochondrial (274 aa).

Residues 29–49 (XXXXXXXXTPEPPVLDPKRPI) form a disordered region. At 79-103 (SHTDIKVPDFSDYRRSEVLDKTKSS) the chain is on the mitochondrial matrix side. Residues 104 to 140 (RESSDARKVFSYMVTATTAVGVTYAAKSIVTQFISSM) form a helical membrane-spanning segment. Residues 141 to 274 (SASADVLAMS…FLSDDMVVVG (134 aa)) are Mitochondrial intermembrane-facing. In terms of domain architecture, Rieske spans 187–272 (EAAVELSQLR…YEFLSDDMVV (86 aa)). [2Fe-2S] cluster contacts are provided by cysteine 217, histidine 219, cysteine 236, histidine 239, and serine 241. A disulfide bond links cysteine 222 and cysteine 238.

It belongs to the Rieske iron-sulfur protein family. As to quaternary structure, component of the ubiquinol-cytochrome c oxidoreductase (cytochrome b-c1 complex, complex III, CIII), a multisubunit enzyme composed of 11 subunits. The complex is composed of 3 respiratory subunits cytochrome b, cytochrome c1 and Rieske protein UQCRFS1, 2 core protein subunits UQCRC1/QCR1 and UQCRC2/QCR2, and 6 low-molecular weight protein subunits UQCRH/QCR6, UQCRB/QCR7, UQCRQ/QCR8, UQCR10/QCR9, UQCR11/QCR10 and subunit 9, the cleavage product of Rieske protein UQCRFS1. The complex exists as an obligatory dimer and forms supercomplexes (SCs) in the inner mitochondrial membrane with NADH-ubiquinone oxidoreductase (complex I, CI) and cytochrome c oxidase (complex IV, CIV), resulting in different assemblies (supercomplex SCI(1)III(2)IV(1) and megacomplex MCI(2)III(2)IV(2)). Incorporation of the Rieske protein UQCRFS1 is the penultimate step in complex III assembly. Interacts with TTC19, which is involved in the clearance of UQCRFS1 fragments. Component of the ubiquinol-cytochrome c oxidoreductase (cytochrome b-c1 complex, complex III, CIII). Subunit 9 corresponds to the mitochondrial targeting sequence (MTS) of Rieske protein UQCRFS1. It is retained after processing and incorporated inside complex III, where it remains bound to the complex and localizes between the 2 core subunits UQCRC1/QCR1 and UQCRC2/QCR2. Requires [2Fe-2S] cluster as cofactor. In terms of processing, proteolytic processing is necessary for the correct insertion of UQCRFS1 in the complex III dimer. Several fragments are generated during UQCRFS1 insertion, most probably due to the endogenous matrix-processing peptidase (MPP) activity of the 2 core protein subunits UQCRC1/QCR1 and UQCRC2/QCR2, which are homologous to the 2 mitochondrial-processing peptidase (MPP) subunits beta-MPP and alpha-MPP respectively. The action of the protease is also necessary for the clearance of the UQCRFS1 fragments.

It is found in the mitochondrion inner membrane. The catalysed reaction is a quinol + 2 Fe(III)-[cytochrome c](out) = a quinone + 2 Fe(II)-[cytochrome c](out) + 2 H(+)(out). In terms of biological role, component of the ubiquinol-cytochrome c oxidoreductase, a multisubunit transmembrane complex that is part of the mitochondrial electron transport chain which drives oxidative phosphorylation. The respiratory chain contains 3 multisubunit complexes succinate dehydrogenase (complex II, CII), ubiquinol-cytochrome c oxidoreductase (cytochrome b-c1 complex, complex III, CIII) and cytochrome c oxidase (complex IV, CIV), that cooperate to transfer electrons derived from NADH and succinate to molecular oxygen, creating an electrochemical gradient over the inner membrane that drives transmembrane transport and the ATP synthase. The cytochrome b-c1 complex catalyzes electron transfer from ubiquinol to cytochrome c, linking this redox reaction to translocation of protons across the mitochondrial inner membrane, with protons being carried across the membrane as hydrogens on the quinol. In the process called Q cycle, 2 protons are consumed from the matrix, 4 protons are released into the intermembrane space and 2 electrons are passed to cytochrome c. The Rieske protein is a catalytic core subunit containing a [2Fe-2S] iron-sulfur cluster. It cycles between 2 conformational states during catalysis to transfer electrons from the quinol bound in the Q(0) site in cytochrome b to cytochrome c1. Incorporation of UQCRFS1 is the penultimate step in complex III assembly. Component of the ubiquinol-cytochrome c oxidoreductase (cytochrome b-c1 complex, complex III, CIII). UQCRFS1 undergoes proteolytic processing once it is incorporated in the complex III dimer. One of the fragments, called subunit 9, corresponds to its mitochondrial targeting sequence (MTS). The proteolytic processing is necessary for the correct insertion of UQCRFS1 in the complex III dimer, but the persistence of UQCRFS1-derived fragments may prevent newly imported UQCRFS1 to be processed and assembled into complex III and is detrimental for the complex III structure and function. This chain is Cytochrome b-c1 complex subunit Rieske, mitochondrial (UQCRFS1), found in Saimiri sciureus (Common squirrel monkey).